A 37-amino-acid chain; its full sequence is Large ribosomal subunit protein bL36 (37 aa).

The protein belongs to the bacterial ribosomal protein bL36 family.

This chain is Large ribosomal subunit protein bL36, found in Chromobacterium violaceum (strain ATCC 12472 / DSM 30191 / JCM 1249 / CCUG 213 / NBRC 12614 / NCIMB 9131 / NCTC 9757 / MK).